We begin with the raw amino-acid sequence, 453 residues long: Vacuolar cation/proton exchanger 1b (453 aa).

The Cytoplasmic portion of the chain corresponds to 1 to 67; that stretch reads MPVSRMMMES…LRSLLANLND (67 aa). A helical transmembrane segment spans residues 68–85; it reads VLLTTRLFLLFPAVLLAI. At 86 to 91 the chain is on the extracellular side; the sequence is AATYLH. Residues 92-109 traverse the membrane as a helical segment; sequence FGQVWVFVLSLIGLVPLA. Topologically, residues 110-126 are cytoplasmic; sequence ERLSFLTEQIAFYTGPT. Residues 127-147 traverse the membrane as a helical segment; the sequence is VGGLLNATFGNVTEVIIALLA. Positions 136 to 171 are cation selection; that stretch reads GNVTEVIIALLALREGKIEVVKCSLLGSILSNLLLV. The Extracellular segment spans residues 148 to 160; the sequence is LREGKIEVVKCSL. Residues 161-181 traverse the membrane as a helical segment; sequence LGSILSNLLLVLGTSLFLAGI. Residues 182-194 lie on the Cytoplasmic side of the membrane; it reads ANLRAHQPYDTKQ. A helical membrane pass occupies residues 195–215; the sequence is AHVNTALLMLAVLCHSLPLML. The Extracellular portion of the chain corresponds to 216 to 232; it reads RYAVTSGDHAIVSGDAA. Residues 233–253 form a helical membrane-spanning segment; it reads LHLSRACSILMLIAYLAYLFF. Over 254-283 the chain is Cytoplasmic; the sequence is QLNTHRQLFEPQQVEDDDDDDLVIAQDDEP. A helical transmembrane segment spans residues 284–304; sequence VLGFSSAMIWLALMTLLTALL. The Extracellular portion of the chain corresponds to 305–327; it reads SGYVVSTIEAASESWELSVSFIS. Residues 328–348 traverse the membrane as a helical segment; it reads IILLPIVGNAAEHAGAVIFAL. A cation selection region spans residues 335 to 370; the sequence is GNAAEHAGAVIFALKNKMDITLGVSLGSATQISMFV. Residues 349-364 lie on the Cytoplasmic side of the membrane; that stretch reads KNKMDITLGVSLGSAT. The chain crosses the membrane as a helical span at residues 365-385; sequence QISMFVVPVSVIVAWTMGIPM. Topologically, residues 386 to 388 are extracellular; the sequence is DLD. The helical transmembrane segment at 389 to 409 threads the bilayer; that stretch reads FNLLETGSLFLAILVTAFTLQ. Over 410–414 the chain is Cytoplasmic; that stretch reads EGESH. Residues 415 to 435 form a helical membrane-spanning segment; the sequence is YLKGLILVLCYAVISVCFFVI. The Extracellular portion of the chain corresponds to 436–453; sequence RRRSAGGTDGVHHLDVIV.

This sequence belongs to the Ca(2+):cation antiporter (CaCA) (TC 2.A.19) family. Cation/proton exchanger (CAX) subfamily. As to expression, expressed in embryo and roots.

The protein resides in the vacuole membrane. Vacuolar cation/proton exchanger (CAX). Translocates Ca(2+) and other metal ions into vacuoles using the proton gradient formed by H(+)-ATPase and H(+)-pyrophosphatase. This chain is Vacuolar cation/proton exchanger 1b (CAX1b), found in Oryza sativa subsp. japonica (Rice).